Consider the following 208-residue polypeptide: UPF0711 protein C18orf21 homolog (208 aa).

Positions 123-137 (SKHKSTPGSASKHRT) are enriched in basic residues. Disordered stretches follow at residues 123–180 (SKHK…KSSP) and 189–208 (MLEN…LSSL). The span at 138–152 (PQTVNWATPKSVANR) shows a compositional bias: polar residues. Residues 153-180 (TPSSTPRSASSNTSSSSSSKSSSVKSSP) are compositionally biased toward low complexity.

Belongs to the UPF0711 family.

In Danio rerio (Zebrafish), this protein is UPF0711 protein C18orf21 homolog.